The primary structure comprises 250 residues: Acetoacetate decarboxylase 1 (250 aa).

Lys120 acts as the Schiff-base intermediate with acetoacetate in catalysis.

The protein belongs to the ADC family.

The enzyme catalyses acetoacetate + H(+) = acetone + CO2. Its function is as follows. Catalyzes the conversion of acetoacetate to acetone and carbon dioxide. In Bradyrhizobium diazoefficiens (strain JCM 10833 / BCRC 13528 / IAM 13628 / NBRC 14792 / USDA 110), this protein is Acetoacetate decarboxylase 1.